A 663-amino-acid chain; its full sequence is General transcription and DNA repair factor IIH subunit tcf-29 (663 aa).

BSD domains lie at Trp147–Ala206 and Glu227–Lys278. Disordered regions lie at residues Asp452–Gly491 and His513–Pro535. Positions Ser453–Ile465 are enriched in basic and acidic residues. Positions Thr515–Thr528 are enriched in low complexity.

The protein belongs to the TFB1 family. In terms of assembly, component of the 7-subunit TFIIH core complex composed of XPB/rad25, XPD/dnr-10, tcf-30/SSL1, tcf-29/TFB1, tcf-11/TFB2, tcf-14/TFB4 and rtf-1/TFB5, which is active in NER. The core complex associates with the 3-subunit CTD-kinase module TFIIK composed of div-66/cyclin H, prk-3/KIN28 and rtf-2/TFB3 to form the 10-subunit holoenzyme (holo-TFIIH) active in transcription.

Its subcellular location is the nucleus. Functionally, component of the general transcription and DNA repair factor IIH (TFIIH) core complex, which is involved in general and transcription-coupled nucleotide excision repair (NER) of damaged DNA and, when complexed to TFIIK, in RNA transcription by RNA polymerase II. In NER, TFIIH acts by opening DNA around the lesion to allow the excision of the damaged oligonucleotide and its replacement by a new DNA fragment. In transcription, TFIIH has an essential role in transcription initiation. When the pre-initiation complex (PIC) has been established, TFIIH is required for promoter opening and promoter escape. Phosphorylation of the C-terminal tail (CTD) of the largest subunit of RNA polymerase II by the kinase module TFIIK controls the initiation of transcription. The chain is General transcription and DNA repair factor IIH subunit tcf-29 (tcf-29) from Neurospora crassa (strain ATCC 24698 / 74-OR23-1A / CBS 708.71 / DSM 1257 / FGSC 987).